The following is a 533-amino-acid chain: MLEEGNNVYEIQDLEKRSPVIGSSLENEKKVAASETFTATSEDDQQYIVESSEATKLSWFHKFFASLNAETKGVEPVTEDEKTDDSILNAASMWFSANMVIASYALGALGPMVFGLNFGQSVLVIIFFNIMGLIFVAFFSVFGAELGLRQMILSRYLVGNVTARIFSLINVIACVGWGIVNTSVSAQLLNMVNEGSGHVCPIWAGCLIIIGGTVLVTFFGYSVIHAYEKWSWVPNFAVFLVIIAQLSRSGKFKGGEWVGGATTAGSVLSFGSSIFGFAAGWTTYAADYTVYMPKSTNKYKIFFSLVAGLAFPLFFTMILGAASAMAALNDPTWKAYYDKNAMGGVIYAILVPNSLNGFGQFCCVLLALSTIANNIPNMYTVALSAQALWAPLAKIPRVVWTMAGNAATLGISIPATYYFDGFMENFMDSIGYYLAIYIAISCSEHFFYRRSFSAYNIDDWDNWEHLPIGIAGTAALIVGAFGVALGMCQTYWVGEIGRLIGKYGGDIGFELGASWAFIIYNILRPLELKYFGR.

At 1-98 (MLEEGNNVYE…NAASMWFSAN (98 aa)) the chain is on the cytoplasmic side. Lys16 is covalently cross-linked (Glycyl lysine isopeptide (Lys-Gly) (interchain with G-Cter in ubiquitin)). Ser18 is modified (phosphoserine). Residues 99–119 (MVIASYALGALGPMVFGLNFG) form a helical membrane-spanning segment. Over 120 to 121 (QS) the chain is Extracellular. Residues 122–141 (VLVIIFFNIMGLIFVAFFSV) traverse the membrane as a helical segment. The Cytoplasmic portion of the chain corresponds to 142–198 (FGAELGLRQMILSRYLVGNVTARIFSLINVIACVGWGIVNTSVSAQLLNMVNEGSGH). The surface seeking stretch occupies residues 165–184 (IFSLINVIACVGWGIVNTSV). A helical transmembrane segment spans residues 199–218 (VCPIWAGCLIIIGGTVLVTF). The Extracellular portion of the chain corresponds to 219–256 (FGYSVIHAYEKWSWVPNFAVFLVIIAQLSRSGKFKGGE). A helical transmembrane segment spans residues 257–276 (WVGGATTAGSVLSFGSSIFG). Topologically, residues 277 to 300 (FAAGWTTYAADYTVYMPKSTNKYK) are cytoplasmic. The chain crosses the membrane as a helical span at residues 301 to 320 (IFFSLVAGLAFPLFFTMILG). Residues 321-347 (AASAMAALNDPTWKAYYDKNAMGGVIY) lie on the Extracellular side of the membrane. The chain crosses the membrane as a helical span at residues 348–367 (AILVPNSLNGFGQFCCVLLA). Residues 368-398 (LSTIANNIPNMYTVALSAQALWAPLAKIPRV) lie on the Cytoplasmic side of the membrane. The chain crosses the membrane as a helical span at residues 399 to 418 (VWTMAGNAATLGISIPATYY). Residues 419–465 (FDGFMENFMDSIGYYLAIYIAISCSEHFFYRRSFSAYNIDDWDNWEH) are Extracellular-facing. A helical membrane pass occupies residues 466 to 485 (LPIGIAGTAALIVGAFGVAL). Residues 486 to 533 (GMCQTYWVGEIGRLIGKYGGDIGFELGASWAFIIYNILRPLELKYFGR) lie on the Cytoplasmic side of the membrane.

This sequence belongs to the purine-cytosine permease (2.A.39) family. Not N-glycosylated.

The protein resides in the membrane. Its function is as follows. This permease has a broad specificity towards purines, and also transport cytosine and 5-methylcytosine but neither uracil nor thymine. In Saccharomyces cerevisiae (strain ATCC 204508 / S288c) (Baker's yeast), this protein is Purine-cytosine permease FCY2 (FCY2).